The following is a 388-amino-acid chain: uncharacterized protein (388 aa).

11 consecutive transmembrane segments (helical) span residues 18–38 (AAMF…PLYV), 42–62 (LHLS…ATLL), 89–111 (ASGL…WAIL), 116–136 (VLLG…GMWL), 145–165 (VISW…PLGL), 171–191 (AGLA…SGVI), 219–239 (TGLV…ALWF), 248–268 (GFAM…CAKF), 287–307 (TGLA…GAAI), 341–361 (AFQD…TPFI), and 365–385 (QVFL…HLLL).

The protein belongs to the major facilitator superfamily. YfcJ family.

It is found in the cell inner membrane. This is an uncharacterized protein from Salmonella typhimurium (strain LT2 / SGSC1412 / ATCC 700720).